The following is a 540-amino-acid chain: Light-independent protochlorophyllide reductase subunit B (540 aa).

Asp36 contributes to the [4Fe-4S] cluster binding site. Catalysis depends on Asp287, which acts as the Proton donor. 422–423 is a substrate binding site; the sequence is GL.

This sequence belongs to the ChlB/BchB/BchZ family. As to quaternary structure, protochlorophyllide reductase is composed of three subunits; BchL, BchN and BchB. Forms a heterotetramer of two BchB and two BchN subunits. It depends on [4Fe-4S] cluster as a cofactor.

It catalyses the reaction chlorophyllide a + oxidized 2[4Fe-4S]-[ferredoxin] + 2 ADP + 2 phosphate = protochlorophyllide a + reduced 2[4Fe-4S]-[ferredoxin] + 2 ATP + 2 H2O. It participates in porphyrin-containing compound metabolism; bacteriochlorophyll biosynthesis (light-independent). Functionally, component of the dark-operative protochlorophyllide reductase (DPOR) that uses Mg-ATP and reduced ferredoxin to reduce ring D of protochlorophyllide (Pchlide) to form chlorophyllide a (Chlide). This reaction is light-independent. The NB-protein (BchN-BchB) is the catalytic component of the complex. The protein is Light-independent protochlorophyllide reductase subunit B of Rhodopseudomonas palustris (strain TIE-1).